Here is a 346-residue protein sequence, read N- to C-terminus: Ferredoxin--NADP reductase 1 (346 aa).

7 residues coordinate FAD: E37, K45, Y49, I89, P124, D287, and S328.

The protein belongs to the ferredoxin--NADP reductase type 2 family. As to quaternary structure, homodimer. FAD serves as cofactor.

It catalyses the reaction 2 reduced [2Fe-2S]-[ferredoxin] + NADP(+) + H(+) = 2 oxidized [2Fe-2S]-[ferredoxin] + NADPH. This is Ferredoxin--NADP reductase 1 from Bacillus pumilus (strain SAFR-032).